The chain runs to 1097 residues: Protein kinase C-like 1 (1097 aa).

REM-1 domains follow at residues 2-76 and 106-183; these read STSQ…QMQR and KYEC…FSIN. Residues 189–311 form the C2 domain; the sequence is RDYEIMDSTK…AKDQGSSGWL (123 aa). Residues 304–359 are disordered; the sequence is DQGSSGWLPAANLPQTGGSGAGTGSSMTGGASYGATSPLPAHNDLRPSVSPSSDAK. The segment covering 327–340 has biased composition (low complexity); the sequence is GSSMTGGASYGATS. Phorbol-ester/DAG-type zinc fingers lie at residues 415 to 462 and 480 to 530; these read GHQF…VTKC and PHRF…PDFC. Disordered regions lie at residues 548–594, 615–646, and 724–763; these read KVSP…LRPA, YQEPVELPPQQQNQVVPSTRRRGHGSTDLSFE, and ETSHAKQQNQQVQQVQQQEELGHQRTHSSGKSGKSKRRKR. Residues 574-583 are compositionally biased toward basic and acidic residues; the sequence is PSMDSEETLH. Low complexity predominate over residues 730-741; it reads QQNQQVQQVQQQ. Basic residues predominate over residues 747–763; the sequence is QRTHSSGKSGKSKRRKR. The region spanning 770–1029 is the Protein kinase domain; it reads FQFLAVLGKG…AEEIMEHPYF (260 aa). ATP is bound by residues 776-784 and Lys799; that span reads LGKGNFGKV. Asp895 acts as the Proton acceptor in catalysis. Residues 1030–1097 form the AGC-kinase C-terminal domain; the sequence is HDVNFDDVLN…FSHISDNATI (68 aa).

The protein belongs to the protein kinase superfamily. AGC Ser/Thr protein kinase family. PKC subfamily.

It catalyses the reaction L-seryl-[protein] + ATP = O-phospho-L-seryl-[protein] + ADP + H(+). It carries out the reaction L-threonyl-[protein] + ATP = O-phospho-L-threonyl-[protein] + ADP + H(+). Functionally, necessary for osmotic stability. The polypeptide is Protein kinase C-like 1 (PKC1) (Candida albicans (Yeast)).